The chain runs to 1448 residues: Murinoglobulin-2 (1448 aa).

The N-terminal stretch at 1–24 (MWKNREAQLCLFSVLLAFLPSASL) is a signal peptide. Disulfide bonds link cysteine 48/cysteine 86, cysteine 245/cysteine 277, and cysteine 263/cysteine 289. An N-linked (GlcNAc...) asparagine glycan is attached at asparagine 55. Residues asparagine 295, asparagine 315, asparagine 387, and asparagine 502 are each glycosylated (N-linked (GlcNAc...) asparagine). 3 disulfide bridges follow: cysteine 462/cysteine 556, cysteine 588/cysteine 748, and cysteine 636/cysteine 681. The bait region stretch occupies residues 678–709 (PTYCYDLPKEPPRKDPPRKDPEPKDTVVETIR). 2 N-linked (GlcNAc...) asparagine glycosylation sites follow: asparagine 751 and asparagine 846. Intrachain disulfides connect cysteine 824–cysteine 860, cysteine 898–cysteine 1295, cysteine 1056–cysteine 1101, and cysteine 1326–cysteine 1441. Residues 949 to 952 (CGEQ) constitute a cross-link (isoglutamyl cysteine thioester (Cys-Gln)). N-linked (GlcNAc...) asparagine glycosylation occurs at asparagine 968. Residues asparagine 1114, asparagine 1285, and asparagine 1398 are each glycosylated (N-linked (GlcNAc...) asparagine).

It belongs to the protease inhibitor I39 (alpha-2-macroglobulin) family. In terms of assembly, monomer.

It is found in the secreted. Its function is as follows. A proteinase activates the inhibitor by specific proteolysis in the bait region, which, by an unknown mechanism leads to reaction at the cysteinyl-glutamyl internal thiol ester site and to a conformational change, whereby the proteinase is trapped and/or covalently bound to the inhibitor. While in the tetrameric proteinase inhibitors steric inhibition is sufficiently strong, monomeric forms need a covalent linkage between the activated glutamyl residue of the original thiol ester and a terminal amino group of a lysine or another nucleophilic group on the proteinase, for inhibition to be effective. This chain is Murinoglobulin-2, found in Rattus norvegicus (Rat).